A 182-amino-acid polypeptide reads, in one-letter code: Ferritin heavy chain (182 aa).

Met1 bears the N-acetylmethionine mark. The residue at position 2 (Thr2) is an N-acetylthreonine; in Ferritin heavy chain, N-terminally processed. In terms of domain architecture, Ferritin-like diiron spans 11 to 160 (QNYHQDSEAA…DHVTNLRKMG (150 aa)). Fe cation is bound by residues Glu28, Glu63, His66, Glu108, and Gln142.

This sequence belongs to the ferritin family. Oligomer of 24 subunits. There are two types of subunits: L (light) chain and H (heavy) chain. The major chain can be light or heavy, depending on the species and tissue type. The functional molecule forms a roughly spherical shell with a diameter of 12 nm and contains a central cavity into which the insoluble mineral iron core is deposited. Interacts with NCOA4; NCOA4 promotes targeting of the iron-binding ferritin complex to autolysosomes following starvation or iron depletion.

Its subcellular location is the cytoplasm. It is found in the lysosome. It localises to the cytoplasmic vesicle. The protein resides in the autophagosome. It catalyses the reaction 4 Fe(2+) + O2 + 4 H(+) = 4 Fe(3+) + 2 H2O. Functionally, stores iron in a soluble, non-toxic, readily available form. Important for iron homeostasis. Has ferroxidase activity. Iron is taken up in the ferrous form and deposited as ferric hydroxides after oxidation. Also plays a role in delivery of iron to cells. Mediates iron uptake in capsule cells of the developing kidney. Delivery to lysosomes is mediated by the cargo receptor NCOA4 for autophagic degradation and release of iron. The chain is Ferritin heavy chain (Fth1) from Rattus norvegicus (Rat).